Consider the following 459-residue polypeptide: DnaJ homolog subfamily A member 1 homolog (459 aa).

The 68-residue stretch at 6-73 folds into the J domain; that stretch reads EYYERLGVKP…EKRKMYDSYG (68 aa). Residues 158-243 form a CR-type zinc finger; it reads GKLVKISISR…CKGKRVIQGK (86 aa). Cys171, Cys174, Cys188, Cys191, Cys215, Cys218, Cys231, and Cys234 together coordinate Zn(2+). CXXCXGXG motif repeat units follow at residues 171–178, 188–195, 215–222, and 231–238; these read CKTCKGSG, CPTCNGSR, CHTCHGTG, and CKECKGKR. Residues 405–459 are disordered; it reads NTNEQSSHGGAGGAYQQHGGAYGHQKQQQQGFNPADFGAQFGGGGPQQAQQCQQQ. A compositionally biased stretch (low complexity) spans 418–435; sequence AYQQHGGAYGHQKQQQQG. At Cys456 the chain carries Cysteine methyl ester. A lipid anchor (S-farnesyl cysteine) is attached at Cys456. Positions 457 to 459 are cleaved as a propeptide — removed in mature form; it reads QQQ.

The protein resides in the membrane. It is found in the cytoplasm. The protein localises to the microsome. Its subcellular location is the mitochondrion. It localises to the nucleus. The protein resides in the perinuclear region. Functionally, co-chaperone for Hsp70 family members. Plays a role in protein transport into mitochondria and in the regulation of apoptosis via its role as co-chaperone. The sequence is that of DnaJ homolog subfamily A member 1 homolog (dnaja1) from Dictyostelium discoideum (Social amoeba).